The chain runs to 198 residues: RNA pyrophosphohydrolase (198 aa).

The 144-residue stretch at 6-149 (GYRPNVGIVI…KKEVYRKAMK (144 aa)) folds into the Nudix hydrolase domain. The Nudix box signature appears at 38-59 (GGINDNESAEQAMYRELFEEVG).

The protein belongs to the Nudix hydrolase family. RppH subfamily. The cofactor is a divalent metal cation.

Functionally, accelerates the degradation of transcripts by removing pyrophosphate from the 5'-end of triphosphorylated RNA, leading to a more labile monophosphorylated state that can stimulate subsequent ribonuclease cleavage. In Pasteurella multocida (strain Pm70), this protein is RNA pyrophosphohydrolase.